The chain runs to 529 residues: Bifunctional purine biosynthesis protein PurH (529 aa).

An MGS-like domain is found at 1–148; sequence MQQRRPVRRA…KNHKDVAIVV (148 aa).

The protein belongs to the PurH family.

It catalyses the reaction (6R)-10-formyltetrahydrofolate + 5-amino-1-(5-phospho-beta-D-ribosyl)imidazole-4-carboxamide = 5-formamido-1-(5-phospho-D-ribosyl)imidazole-4-carboxamide + (6S)-5,6,7,8-tetrahydrofolate. The enzyme catalyses IMP + H2O = 5-formamido-1-(5-phospho-D-ribosyl)imidazole-4-carboxamide. It functions in the pathway purine metabolism; IMP biosynthesis via de novo pathway; 5-formamido-1-(5-phospho-D-ribosyl)imidazole-4-carboxamide from 5-amino-1-(5-phospho-D-ribosyl)imidazole-4-carboxamide (10-formyl THF route): step 1/1. It participates in purine metabolism; IMP biosynthesis via de novo pathway; IMP from 5-formamido-1-(5-phospho-D-ribosyl)imidazole-4-carboxamide: step 1/1. This chain is Bifunctional purine biosynthesis protein PurH, found in Salmonella newport (strain SL254).